The chain runs to 589 residues: Chromodomain Y-like protein (589 aa).

A compositionally biased stretch (polar residues) spans 1-10 (MGLGSSQPST). The interval 1–57 (MGLGSSQPSTKEAEPCTLQEKEEHPVDDTRQQNNAVPATVSDPDQVSPAVQDAETQV) is disordered. Positions 11-30 (KEAEPCTLQEKEEHPVDDTR) are enriched in basic and acidic residues. The 61-residue stretch at 55 to 115 (TQVESIVDKR…RHNERQKEGT (61 aa)) folds into the Chromo domain. The tract at residues 55–300 (TQVESIVDKR…TIQTSVTGVT (246 aa)) is interaction with EZH2. Serine 82 is subject to Phosphoserine. The interval 110 to 155 (RQKEGTLARANRASPSNARKQISRSTHSALSKTNPKALVVGKDHES) is disordered. Residues 117 to 128 (ARANRASPSNAR) show a composition bias toward low complexity. Lysine 129 is modified (N6,N6,N6-trimethyllysine; by EHMT2; alternate). At lysine 129 the chain carries N6,N6-dimethyllysine; by EHMT2; alternate. The residue at position 129 (lysine 129) is an N6-methyllysine; by EHMT2; alternate. Residues 132-143 (SRSTHSALSKTN) show a composition bias toward polar residues. 3 positions are modified to phosphoserine: serine 164, serine 195, and serine 210. The interval 202–224 (SIDGFHGESPEKLDQGAEDTVTP) is disordered. Positions 206–216 (FHGESPEKLDQ) are enriched in basic and acidic residues. The acetyl-CoA-binding domain stretch occupies residues 353–585 (SENNSLNPEV…DSMLKYLQRK (233 aa)).

As to quaternary structure, forms multimers and multimerization is required for stable binding to chromatin. Interacts with HDAC1 and HDAC2 via its C-terminal acetyl-CoA-binding domain. Interacts with EZH2, EED, SUZ12, REST, EHMT1 and EHMT2. Part of a complex containing at least CDYL, REST, WIZ, SETB1, EHMT1 and EHMT2. Part of a complex containing at least CDYL, MIER1, MIER2, HDAC1 and HDAC2. Interacts with CHAF1A and CHAF1B; bridging the CAF-1 complex to the MCM2-7 (MCM) complex. Interacts with MCM3 and MCM5; bridging the CAF-1 complex to the MCM2-7 (MCM) complex. Recruited to Xist RNA-coated X chromosome. Interacts with EHMT2 and PRDM9; interaction only takes place when PRDM9 is bound to hotspot DNA. In terms of tissue distribution, expressed in the brain, with expression in the hippocampal dentate gyrus, CA1, striatum and cortex (at protein level). Expressed in the prelimbic cortex.

It localises to the nucleus. The protein localises to the chromosome. The enzyme catalyses 3-hydroxybutanoyl-CoA = (2E)-butenoyl-CoA + H2O. In terms of biological role, chromatin reader protein that recognizes and binds histone H3 trimethylated at 'Lys-9', dimethylated at 'Lys-27' and trimethylated at 'Lys-27' (H3K9me3, H3K27me2 and H3K27me3, respectively). Part of multimeric repressive chromatin complexes, where it is required for transmission and restoration of repressive histone marks, thereby preserving the epigenetic landscape. Required for chromatin targeting and maximal enzymatic activity of Polycomb repressive complex 2 (PRC2); acts as a positive regulator of PRC2 activity by bridging the pre-existing histone H3K27me3 and newly recruited PRC2 on neighboring nucleosomes. Acts as a corepressor for REST by facilitating histone-lysine N-methyltransferase EHMT2 recruitment and H3K9 dimethylation at REST target genes for repression. Involved in X chromosome inactivation in females: recruited to Xist RNA-coated X chromosome and facilitates propagation of H3K9me2 by anchoring EHMT2. Promotes EZH2 accumulation and H3K27me3 methylation at DNA double strand breaks (DSBs), thereby facilitating transcriptional repression at sites of DNA damage and homology-directed repair of DSBs. Required for neuronal migration during brain development by repressing expression of RHOA. By repressing the expression of SCN8A, contributes to the inhibition of intrinsic neuronal excitability and epileptogenesis. In addition to acting as a chromatin reader, acts as a hydro-lyase. Shows crotonyl-coA hydratase activity by mediating the conversion of crotonyl-CoA ((2E)-butenoyl-CoA) to beta-hydroxybutyryl-CoA (3-hydroxybutanoyl-CoA), thereby acting as a negative regulator of histone crotonylation. Histone crotonylation is required during spermatogenesis; down-regulation of histone crotonylation by CDYL regulates the reactivation of sex chromosome-linked genes in round spermatids and histone replacement in elongating spermatids. By regulating histone crotonylation and trimethylation of H3K27, may be involved in stress-induced depression-like behaviors, possibly by regulating VGF expression. Displays acetyltransferase activity toward tubulin in vitro; such activity is however unsure in vivo and additional evidences would be required to confirm this result. Its function is as follows. Not able to recognize and bind histone H3K9me3, histone H3K27me2 and histone H3K27me3, due to the presence of a N-terminal extension that inactivates the chromo domain. The chain is Chromodomain Y-like protein from Rattus norvegicus (Rat).